Here is a 177-residue protein sequence, read N- to C-terminus: Large ribosomal subunit protein uL16m (177 aa).

This sequence belongs to the universal ribosomal protein uL16 family.

It is found in the mitochondrion. The polypeptide is Large ribosomal subunit protein uL16m (RPL16) (Brassica napus (Rape)).